Consider the following 469-residue polypeptide: UDP-N-acetylmuramate--L-alanine ligase (469 aa).

122–128 serves as a coordination point for ATP; sequence GTHGKTT.

The protein belongs to the MurCDEF family.

The protein localises to the cytoplasm. It carries out the reaction UDP-N-acetyl-alpha-D-muramate + L-alanine + ATP = UDP-N-acetyl-alpha-D-muramoyl-L-alanine + ADP + phosphate + H(+). It participates in cell wall biogenesis; peptidoglycan biosynthesis. Cell wall formation. This Legionella pneumophila subsp. pneumophila (strain Philadelphia 1 / ATCC 33152 / DSM 7513) protein is UDP-N-acetylmuramate--L-alanine ligase.